Here is a 455-residue protein sequence, read N- to C-terminus: Tubulin alpha-1 chain (455 aa).

Positions 11, 75, 144, 148, 149, 183, 210, and 232 each coordinate GTP. Glu75 lines the Mg(2+) pocket. Residue Glu258 is part of the active site.

The protein belongs to the tubulin family. In terms of assembly, dimer of alpha and beta chains. A typical microtubule is a hollow water-filled tube with an outer diameter of 25 nm and an inner diameter of 15 nM. Alpha-beta heterodimers associate head-to-tail to form protofilaments running lengthwise along the microtubule wall with the beta-tubulin subunit facing the microtubule plus end conferring a structural polarity. Microtubules usually have 13 protofilaments but different protofilament numbers can be found in some organisms and specialized cells. Mg(2+) serves as cofactor.

The protein resides in the cytoplasm. Its subcellular location is the cytoskeleton. The enzyme catalyses GTP + H2O = GDP + phosphate + H(+). Tubulin is the major constituent of microtubules, a cylinder consisting of laterally associated linear protofilaments composed of alpha- and beta-tubulin heterodimers. Microtubules grow by the addition of GTP-tubulin dimers to the microtubule end, where a stabilizing cap forms. Below the cap, tubulin dimers are in GDP-bound state, owing to GTPase activity of alpha-tubulin. In Schizosaccharomyces pombe (strain 972 / ATCC 24843) (Fission yeast), this protein is Tubulin alpha-1 chain (nda2).